Reading from the N-terminus, the 343-residue chain is D-beta-hydroxybutyrate dehydrogenase, mitochondrial (343 aa).

A mitochondrion-targeting transit peptide spans M1–Y46. L59–F83 is an NAD(+) binding site. Residue K73 is modified to N6-acetyllysine. Position 103 is an N6-acetyllysine; alternate (K103). The residue at position 103 (K103) is an N6-succinyllysine; alternate. Residues K132 and K177 each carry the N6-acetyllysine modification. A substrate-binding site is contributed by S195. The active-site Proton acceptor is the Y208. K212 is modified (N6-acetyllysine). S219 carries O-linked (GlcNAc) serine glycosylation. Residue S246 is modified to Phosphoserine. The residue at position 258 (K258) is an N6-acetyllysine. An N6-acetyllysine; alternate modification is found at K259. K259 carries the N6-succinyllysine; alternate modification. Position 280 is an N6-acetyllysine (K280).

It belongs to the short-chain dehydrogenases/reductases (SDR) family. In terms of assembly, homotetramer. In terms of tissue distribution, expressed in liver.

The protein localises to the mitochondrion inner membrane. It localises to the mitochondrion matrix. The catalysed reaction is (R)-3-hydroxybutanoate + NAD(+) = acetoacetate + NADH + H(+). Its activity is regulated as follows. Requires phosphatidylcholine as an allosteric activator for enzymatic activity. The protein is D-beta-hydroxybutyrate dehydrogenase, mitochondrial of Rattus norvegicus (Rat).